The following is a 31-amino-acid chain: Cytochrome b6-f complex subunit 6 (31 aa).

Residues 4-24 form a helical membrane-spanning segment; sequence IISYFGFLFGALTLALILFIG.

Belongs to the PetL family. The 4 large subunits of the cytochrome b6-f complex are cytochrome b6, subunit IV (17 kDa polypeptide, PetD), cytochrome f and the Rieske protein, while the 4 small subunits are PetG, PetL, PetM and PetN. The complex functions as a dimer.

The protein resides in the plastid. It localises to the chloroplast thylakoid membrane. In terms of biological role, component of the cytochrome b6-f complex, which mediates electron transfer between photosystem II (PSII) and photosystem I (PSI), cyclic electron flow around PSI, and state transitions. PetL is important for photoautotrophic growth as well as for electron transfer efficiency and stability of the cytochrome b6-f complex. The protein is Cytochrome b6-f complex subunit 6 of Physcomitrium patens (Spreading-leaved earth moss).